The primary structure comprises 331 residues: Beta-ketoacyl-[acyl-carrier-protein] synthase III (331 aa).

Residues cysteine 113 and histidine 253 contribute to the active site. Residues 254 to 258 (QANTR) form an ACP-binding region. Asparagine 283 is a catalytic residue.

Belongs to the thiolase-like superfamily. FabH family. In terms of assembly, homodimer.

Its subcellular location is the cytoplasm. It carries out the reaction malonyl-[ACP] + acetyl-CoA + H(+) = 3-oxobutanoyl-[ACP] + CO2 + CoA. It functions in the pathway lipid metabolism; fatty acid biosynthesis. Catalyzes the condensation reaction of fatty acid synthesis by the addition to an acyl acceptor of two carbons from malonyl-ACP. Catalyzes the first condensation reaction which initiates fatty acid synthesis and may therefore play a role in governing the total rate of fatty acid production. Possesses both acetoacetyl-ACP synthase and acetyl transacylase activities. Its substrate specificity determines the biosynthesis of branched-chain and/or straight-chain of fatty acids. In Desulfitobacterium hafniense (strain DSM 10664 / DCB-2), this protein is Beta-ketoacyl-[acyl-carrier-protein] synthase III.